A 103-amino-acid chain; its full sequence is Protein reprimo A (103 aa).

A helical transmembrane segment spans residues 50–70 (IVQIAVMCVLSLTVVFGIFFL).

It belongs to the reprimo family.

Its subcellular location is the cytoplasm. The protein resides in the membrane. Functionally, may be involved in the regulation of p53-dependent G2 arrest of the cell cycle. In Danio rerio (Zebrafish), this protein is Protein reprimo A.